The sequence spans 558 residues: Phosphatidylserine lipase ABHD16A (558 aa).

The next 2 membrane-spanning stretches (helical) occupy residues 60–80 (ILAL…FAFF) and 93–113 (VVPF…VACL). Topologically, residues 114–558 (RGIGRWTNPQ…AQNFQMPWHL (445 aa)) are cytoplasmic. The AB hydrolase-1 domain occupies 281-407 (LVICCEGNAG…LVTRTVRQHL (127 aa)). Active-site charge relay system residues include serine 355, aspartate 430, and histidine 507.

This sequence belongs to the AB hydrolase superfamily. ABHD16 family.

The protein localises to the membrane. The catalysed reaction is 1-heptadecanoyl-2-(5Z,8Z,11Z,14Z-eicosatetraenoyl)-sn-glycero-3-phosphoserine + H2O = 1-heptadecanoyl-sn-glycero-3-phosphoserine + (5Z,8Z,11Z,14Z)-eicosatetraenoate + H(+). It catalyses the reaction 1-hexadecanoyl-2-(9Z-octadecenoyl)-sn-glycero-3-phospho-L-serine + H2O = 1-hexadecanoyl-sn-glycero-3-phospho-L-serine + (9Z)-octadecenoate + H(+). It carries out the reaction 1-octadecanoyl-2-(9Z,12Z-octadecadienoyl)-sn-glycero-3-phosphoserine + H2O = 1-octadecanoyl-sn-glycero-3-phosphoserine + (9Z,12Z)-octadecadienoate + H(+). The enzyme catalyses 1-heptadecanoyl-2-(5Z,8Z,11Z,14Z-eicosatetraenoyl)-sn-glycero-3-phosphocholine + H2O = 1-heptadecanoyl-sn-glycero-3-phosphocholine + (5Z,8Z,11Z,14Z)-eicosatetraenoate + H(+). The catalysed reaction is 1-hexadecanoyl-2-(9Z-octadecenoyl)-sn-glycero-3-phosphoglycerol + H2O = 1-hexadecanoyl-sn-glycero-3-phosphoglycerol + (9Z)-octadecenoate + H(+). It catalyses the reaction 1-hexadecanoyl-2-(9Z-octadecenoyl)-sn-glycero-3-phospho-(1D-myo-inositol) + H2O = 1-hexadecanoyl-sn-glycero-3-phospho-(1D-myo-inositol) + (9Z)-octadecenoate + H(+). It carries out the reaction 1-heptadecanoyl-2-(5Z,8Z,11Z,14Z-eicosatetraenoyl)-sn-glycero-3-phosphoethanolamine + H2O = 1-heptadecanoyl-sn-glycero-3-phosphoethanolamine + (5Z,8Z,11Z,14Z)-eicosatetraenoate + H(+). The enzyme catalyses 1-hexadecanoyl-2-(9Z-octadecenoyl)-sn-glycero-3-phospho-(1'-sn-glycerol) + H2O = 1-hexadecanoyl-sn-glycero-3-phospho-(1'-sn-glycerol) + (9Z)-octadecenoate + H(+). The catalysed reaction is Hydrolyzes glycerol monoesters of long-chain fatty acids.. It catalyses the reaction 1-tetradecanoylglycerol + H2O = tetradecanoate + glycerol + H(+). It carries out the reaction 2-hexadecanoylglycerol + H2O = glycerol + hexadecanoate + H(+). The enzyme catalyses 1-(9Z-octadecenoyl)-glycerol + H2O = glycerol + (9Z)-octadecenoate + H(+). The catalysed reaction is 2-(9Z-octadecenoyl)-glycerol + H2O = glycerol + (9Z)-octadecenoate + H(+). It catalyses the reaction 2-(9Z,12Z-octadecadienoyl)-glycerol + H2O = (9Z,12Z)-octadecadienoate + glycerol + H(+). It carries out the reaction 1-(5Z,8Z,11Z,14Z-eicosatetraenoyl)-glycerol + H2O = glycerol + (5Z,8Z,11Z,14Z)-eicosatetraenoate + H(+). The enzyme catalyses 2-(5Z,8Z,11Z,14Z-eicosatetraenoyl)-glycerol + H2O = glycerol + (5Z,8Z,11Z,14Z)-eicosatetraenoate + H(+). The catalysed reaction is prostaglandin D2-1-glycerol ester + H2O = prostaglandin D2 + glycerol + H(+). It catalyses the reaction 2-glyceryl-15-deoxy-Delta(12,14)-prostaglandin J2 + H2O = 15-deoxy-Delta(12,14)-prostaglandin J2 + glycerol + H(+). It carries out the reaction 1-(9Z,12Z-octadecadienoyl)-glycerol + H2O = (9Z,12Z)-octadecadienoate + glycerol + H(+). Its function is as follows. Phosphatidylserine (PS) lipase that mediates the hydrolysis of phosphatidylserine to generate lysophosphatidylserine (LPS). LPS constitutes a class of signaling lipids that regulates immunological and neurological processes. Has no activity towards diacylglycerol, triacylglycerol or lysophosphatidylserine lipase. Also has monoacylglycerol lipase activity, with preference for 1-(9Z,12Z-octadecadienoyl)-glycerol (1-LG) and 2-glyceryl-15-deoxy-Delta(12,14)-prostaglandin J2 (15d-PGJ(2)-G). This Bos taurus (Bovine) protein is Phosphatidylserine lipase ABHD16A.